Here is a 143-residue protein sequence, read N- to C-terminus: Nucleoside diphosphate kinase (143 aa).

ATP is bound by residues K11, F59, R87, T93, R104, and N114. H117 acts as the Pros-phosphohistidine intermediate in catalysis.

This sequence belongs to the NDK family. In terms of assembly, homotetramer. Mg(2+) is required as a cofactor.

It localises to the cytoplasm. The enzyme catalyses a 2'-deoxyribonucleoside 5'-diphosphate + ATP = a 2'-deoxyribonucleoside 5'-triphosphate + ADP. The catalysed reaction is a ribonucleoside 5'-diphosphate + ATP = a ribonucleoside 5'-triphosphate + ADP. Functionally, major role in the synthesis of nucleoside triphosphates other than ATP. The ATP gamma phosphate is transferred to the NDP beta phosphate via a ping-pong mechanism, using a phosphorylated active-site intermediate. The protein is Nucleoside diphosphate kinase of Salmonella arizonae (strain ATCC BAA-731 / CDC346-86 / RSK2980).